The following is a 632-amino-acid chain: 1-deoxy-D-xylulose-5-phosphate synthase (632 aa).

Residues M1–D25 are disordered. Residues H87 and G128–S130 each bind thiamine diphosphate. D159 lines the Mg(2+) pocket. Thiamine diphosphate is bound by residues G160–A161, N188, F295, and E378. Position 188 (N188) interacts with Mg(2+).

It belongs to the transketolase family. DXPS subfamily. In terms of assembly, homodimer. The cofactor is Mg(2+). Thiamine diphosphate is required as a cofactor.

It catalyses the reaction D-glyceraldehyde 3-phosphate + pyruvate + H(+) = 1-deoxy-D-xylulose 5-phosphate + CO2. Its pathway is metabolic intermediate biosynthesis; 1-deoxy-D-xylulose 5-phosphate biosynthesis; 1-deoxy-D-xylulose 5-phosphate from D-glyceraldehyde 3-phosphate and pyruvate: step 1/1. Functionally, catalyzes the acyloin condensation reaction between C atoms 2 and 3 of pyruvate and glyceraldehyde 3-phosphate to yield 1-deoxy-D-xylulose-5-phosphate (DXP). This Pseudomonas fluorescens (strain Pf0-1) protein is 1-deoxy-D-xylulose-5-phosphate synthase.